The primary structure comprises 63 residues: Small, acid-soluble spore protein H 2 (63 aa).

This sequence belongs to the SspH family.

It localises to the spore core. This chain is Small, acid-soluble spore protein H 2, found in Clostridium botulinum (strain ATCC 19397 / Type A).